A 532-amino-acid chain; its full sequence is Muscarinic acetylcholine receptor M5 (532 aa).

Residues 1–29 lie on the Extracellular side of the membrane; sequence MEGDSYGNATTINGTPVNHQPLERHRLWE. N8 carries an N-linked (GlcNAc...) asparagine glycan. A helical transmembrane segment spans residues 30–53; the sequence is VITIAAVTAVVSLITIVGNVLVMI. The Cytoplasmic portion of the chain corresponds to 54–66; the sequence is SFKVNSQLKTVNN. A helical transmembrane segment spans residues 67-87; the sequence is YYLLSLACADLIIGIFSMNLY. At 88-104 the chain is on the extracellular side; the sequence is TTYILMGRWALGSLACD. The chain crosses the membrane as a helical span at residues 105–126; the sequence is LWLALDYVASNASVMNLLVISF. Residues 127-146 lie on the Cytoplasmic side of the membrane; that stretch reads DRYFSITRPLTYRAKRTPKR. Residues 147–169 form a helical membrane-spanning segment; sequence AGIMIGLAWLISFILWAPAILCW. Residues 170-191 lie on the Extracellular side of the membrane; sequence QYLVGKRTVPPDECQIQFLSEP. A helical membrane pass occupies residues 192 to 214; that stretch reads TITFGTAIAAFYIPVSVMTILYC. The Cytoplasmic segment spans residues 215–443; that stretch reads RIYRETEKRT…LVKERKAAQT (229 aa). The disordered stretch occupies residues 263 to 294; sequence QRERNQASRSSSHRSTSITGKPSQATGPSTNW. The span at 270 to 279 shows a compositional bias: low complexity; sequence SRSSSHRSTS. Residues 280-294 show a composition bias toward polar residues; that stretch reads ITGKPSQATGPSTNW. The chain crosses the membrane as a helical span at residues 444–464; the sequence is LSAILLAFIITWTPYNIMVLV. At 465–478 the chain is on the extracellular side; that stretch reads STFCDKCVPVALWH. A helical membrane pass occupies residues 479-498; that stretch reads LGYWLCYVNSTVNPICYALC. The Cytoplasmic segment spans residues 499–532; it reads NRTFRKTFKMLLLCQWKKKKVEEKLYWQGNSKLP. Residues T501 and T505 each carry the phosphothreonine modification.

The protein belongs to the G-protein coupled receptor 1 family. Muscarinic acetylcholine receptor subfamily. CHRM5 sub-subfamily.

The protein localises to the cell membrane. It localises to the postsynaptic cell membrane. In terms of biological role, the muscarinic acetylcholine receptor mediates various cellular responses, including inhibition of adenylate cyclase, breakdown of phosphoinositides and modulation of potassium channels through the action of G proteins. Primary transducing effect is Pi turnover. The sequence is that of Muscarinic acetylcholine receptor M5 (CHRM5) from Saimiri boliviensis boliviensis (Bolivian squirrel monkey).